The following is a 283-amino-acid chain: Pantothenate synthetase (283 aa).

Residue 34 to 41 (MGALHDGH) participates in ATP binding. The active-site Proton donor is His-41. (R)-pantoate is bound at residue Gln-65. Residue Gln-65 coordinates beta-alanine. Residue 152-155 (GEKD) participates in ATP binding. (R)-pantoate is bound at residue Gln-158. ATP contacts are provided by residues Val-181 and 189 to 192 (MSSR).

Belongs to the pantothenate synthetase family. As to quaternary structure, homodimer.

The protein resides in the cytoplasm. It catalyses the reaction (R)-pantoate + beta-alanine + ATP = (R)-pantothenate + AMP + diphosphate + H(+). The protein operates within cofactor biosynthesis; (R)-pantothenate biosynthesis; (R)-pantothenate from (R)-pantoate and beta-alanine: step 1/1. Catalyzes the condensation of pantoate with beta-alanine in an ATP-dependent reaction via a pantoyl-adenylate intermediate. In Bradyrhizobium sp. (strain BTAi1 / ATCC BAA-1182), this protein is Pantothenate synthetase.